The sequence spans 113 residues: MKTLPKERRYETLSYLPPLTDQQIAKQVEFLLDQGFIPGVEFEEDPQPETHFWTMWKLPFFGGATANEVLAEVRECRSENPNCYIRVIGFDNIKQCQTVSFIVHKPNQNQGRY.

This sequence belongs to the RuBisCO small chain family. As to quaternary structure, heterohexadecamer of 8 large and 8 small subunits. RuBisCO interacts with the C-terminus of CcmM, and can be found in complexes that also include carbonic anhydrase (ccaA).

The protein resides in the carboxysome. Functionally, ruBisCO catalyzes two reactions: the carboxylation of D-ribulose 1,5-bisphosphate, the primary event in carbon dioxide fixation, as well as the oxidative fragmentation of the pentose substrate in the photorespiration process. Both reactions occur simultaneously and in competition at the same active site. Although the small subunit is not catalytic it is essential for maximal activity. The sequence is that of Ribulose bisphosphate carboxylase small subunit from Synechocystis sp. (strain ATCC 27184 / PCC 6803 / Kazusa).